The sequence spans 212 residues: Leucyl/phenylalanyl-tRNA--protein transferase (212 aa).

It belongs to the L/F-transferase family.

Its subcellular location is the cytoplasm. It carries out the reaction N-terminal L-lysyl-[protein] + L-leucyl-tRNA(Leu) = N-terminal L-leucyl-L-lysyl-[protein] + tRNA(Leu) + H(+). The enzyme catalyses N-terminal L-arginyl-[protein] + L-leucyl-tRNA(Leu) = N-terminal L-leucyl-L-arginyl-[protein] + tRNA(Leu) + H(+). It catalyses the reaction L-phenylalanyl-tRNA(Phe) + an N-terminal L-alpha-aminoacyl-[protein] = an N-terminal L-phenylalanyl-L-alpha-aminoacyl-[protein] + tRNA(Phe). Its function is as follows. Functions in the N-end rule pathway of protein degradation where it conjugates Leu, Phe and, less efficiently, Met from aminoacyl-tRNAs to the N-termini of proteins containing an N-terminal arginine or lysine. In Allorhizobium ampelinum (strain ATCC BAA-846 / DSM 112012 / S4) (Agrobacterium vitis (strain S4)), this protein is Leucyl/phenylalanyl-tRNA--protein transferase.